A 378-amino-acid polypeptide reads, in one-letter code: Chaperone protein DnaJ (378 aa).

Positions 5–70 constitute a J domain; that stretch reads DYYEVLGVAK…QKRAAYDQYG (66 aa). The segment at 138–216 adopts a CR-type zinc-finger fold; sequence GYDTQIRVPS…CHGSGKVKET (79 aa). Zn(2+)-binding residues include Cys-151, Cys-154, Cys-168, Cys-171, Cys-190, Cys-193, Cys-204, and Cys-207. 4 CXXCXGXG motif repeats span residues 151 to 158, 168 to 175, 190 to 197, and 204 to 211; these read CEVCHGSG, CPTCHGQG, CPKCHGTG, and CVHCHGSG.

This sequence belongs to the DnaJ family. Homodimer. Zn(2+) is required as a cofactor.

The protein localises to the cytoplasm. Its function is as follows. Participates actively in the response to hyperosmotic and heat shock by preventing the aggregation of stress-denatured proteins and by disaggregating proteins, also in an autonomous, DnaK-independent fashion. Unfolded proteins bind initially to DnaJ; upon interaction with the DnaJ-bound protein, DnaK hydrolyzes its bound ATP, resulting in the formation of a stable complex. GrpE releases ADP from DnaK; ATP binding to DnaK triggers the release of the substrate protein, thus completing the reaction cycle. Several rounds of ATP-dependent interactions between DnaJ, DnaK and GrpE are required for fully efficient folding. Also involved, together with DnaK and GrpE, in the DNA replication of plasmids through activation of initiation proteins. The protein is Chaperone protein DnaJ of Burkholderia ambifaria (strain MC40-6).